The sequence spans 84 residues: U7-ctenitoxin-Pn1a (84 aa).

The N-terminal stretch at 1–17 is a signal peptide; that stretch reads MKLCILLVVLLITVVRA. The propeptide occupies 18–38; that stretch reads EEDILENEAEDISPAIKERSA. 4 disulfides stabilise this stretch: Cys41/Cys56, Cys48/Cys61, Cys55/Cys78, and Cys63/Cys76.

In terms of tissue distribution, expressed by the venom gland.

The protein localises to the secreted. Functionally, antagonist of L-type calcium channels (Cav1/CACNA1). Causes paralysis in the posterior limbs and gradual decreases in movement and aggression during 24 hours at dose levels of 5 ug per mouse. In Phoneutria nigriventer (Brazilian armed spider), this protein is U7-ctenitoxin-Pn1a.